The primary structure comprises 239 residues: Ribosome assembly factor mrt4 (239 aa).

The protein belongs to the universal ribosomal protein uL10 family. In terms of assembly, associates with the pre-60S ribosomal particle.

It is found in the nucleus. It localises to the nucleolus. Its subcellular location is the cytoplasm. Functionally, component of the ribosome assembly machinery. Nuclear paralog of the ribosomal protein P0, it binds pre-60S subunits at an early stage of assembly in the nucleolus, and is replaced by P0 in cytoplasmic pre-60S subunits and mature 80S ribosomes. The polypeptide is Ribosome assembly factor mrt4 (Candida glabrata (strain ATCC 2001 / BCRC 20586 / JCM 3761 / NBRC 0622 / NRRL Y-65 / CBS 138) (Yeast)).